A 207-amino-acid polypeptide reads, in one-letter code: Small ribosomal subunit protein uS4 (207 aa).

Residues 97 to 165 (SRLDNLVFRM…VKLALESKAV (69 aa)) enclose the S4 RNA-binding domain.

Belongs to the universal ribosomal protein uS4 family. Part of the 30S ribosomal subunit. Contacts protein S5. The interaction surface between S4 and S5 is involved in control of translational fidelity.

One of the primary rRNA binding proteins, it binds directly to 16S rRNA where it nucleates assembly of the body of the 30S subunit. Its function is as follows. With S5 and S12 plays an important role in translational accuracy. The polypeptide is Small ribosomal subunit protein uS4 (Mycoplasmoides gallisepticum (strain R(low / passage 15 / clone 2)) (Mycoplasma gallisepticum)).